The following is a 728-amino-acid chain: 1,4-alpha-glucan branching enzyme GlgB (728 aa).

Asp-405 acts as the Nucleophile in catalysis. Glu-458 (proton donor) is an active-site residue.

Belongs to the glycosyl hydrolase 13 family. GlgB subfamily. In terms of assembly, monomer.

It catalyses the reaction Transfers a segment of a (1-&gt;4)-alpha-D-glucan chain to a primary hydroxy group in a similar glucan chain.. The protein operates within glycan biosynthesis; glycogen biosynthesis. In terms of biological role, catalyzes the formation of the alpha-1,6-glucosidic linkages in glycogen by scission of a 1,4-alpha-linked oligosaccharide from growing alpha-1,4-glucan chains and the subsequent attachment of the oligosaccharide to the alpha-1,6 position. This Klebsiella pneumoniae subsp. pneumoniae (strain ATCC 700721 / MGH 78578) protein is 1,4-alpha-glucan branching enzyme GlgB.